The primary structure comprises 408 residues: Methyltransferase/ribosomally synthesized type I borosin cyclic peptide precursor sveMA (408 aa).

The segment at Met-1 to Arg-250 is methyltransferase domain. Active-site residues include Arg-73, Tyr-77, and Tyr-99. Residues Tyr-99, His-101, Ile-104, Ala-131, Gln-173, Gly-211, Ser-242, and Thr-244 each coordinate S-adenosyl-L-methionine. Residues Asp-251–Thr-375 form a clasp domain region. The segment at Val-371–Pro-385 is precursor leader. N-methylvaline is present on Val-401. Ile-402 bears the N-methylisoleucine mark. Position 406 is an N-methylvaline (Val-406).

The protein in the N-terminal section; belongs to the precorrin methyltransferase family. Homodimer. In terms of processing, sveMA automethylates at Val-401, Ile-402 and Val-406 before being processed by a prolyloligopeptidase which likely forms a peptidyl ester upon removal of the follower propeptide, which then undergoes macrocyclization with the N-terminus of the modified core peptide. Peptide backbone alpha-N-methylations change the physicochemical properties of amide bonds to provide structural constraints and other favorable characteristics including biological membrane permeability to peptides.

It functions in the pathway secondary metabolite biosynthesis. Its function is as follows. Fusion protein of the methyltransferase sveM and a type I borosin core peptide; part of the gene cluster that mediates the biosynthesis of a type I borosin, a highly methylated cyclic peptide with potent biological activities. Type I borosins derive from the C-terminus of the fusion protein, and it is the same protein that methylates its own C-terminus using S-adenosyl methionine (SAM). The C-terminus is subsequently cleaved off and macrocyclized by a prolyloligopeptidase to give the final product. The protein is Methyltransferase/ribosomally synthesized type I borosin cyclic peptide precursor sveMA of Serendipita vermifera subsp. bescii (Mycorrhizal fungus).